The sequence spans 429 residues: Glucose-1-phosphate adenylyltransferase (429 aa).

Residues G162, 177–178 (EK), and S209 contribute to the alpha-D-glucose 1-phosphate site.

The protein belongs to the bacterial/plant glucose-1-phosphate adenylyltransferase family. Homotetramer.

The catalysed reaction is alpha-D-glucose 1-phosphate + ATP + H(+) = ADP-alpha-D-glucose + diphosphate. The protein operates within glycan biosynthesis; glycogen biosynthesis. In terms of biological role, involved in the biosynthesis of ADP-glucose, a building block required for the elongation reactions to produce glycogen. Catalyzes the reaction between ATP and alpha-D-glucose 1-phosphate (G1P) to produce pyrophosphate and ADP-Glc. This chain is Glucose-1-phosphate adenylyltransferase, found in Cyanothece sp. (strain PCC 7425 / ATCC 29141).